The sequence spans 285 residues: Tropomyosin-2 (285 aa).

Residues 1–277 (MDAIKKKMQA…KDIGDDLDTA (277 aa)) are a coiled coil. Residues 103 to 133 (EERLATATAKLSEASQAADESERARKVLENR) form a disordered region. Basic and acidic residues predominate over residues 122-133 (ESERARKVLENR).

Belongs to the tropomyosin family. Homodimer.

Tropomyosin, in association with the troponin complex, plays a central role in the calcium dependent regulation of muscle contraction. In Bombyx mori (Silk moth), this protein is Tropomyosin-2.